A 110-amino-acid chain; its full sequence is Iron-sulfur cluster assembly protein CyaY (110 aa).

Belongs to the frataxin family.

Functionally, involved in iron-sulfur (Fe-S) cluster assembly. May act as a regulator of Fe-S biogenesis. The chain is Iron-sulfur cluster assembly protein CyaY from Pseudomonas fluorescens (strain Pf0-1).